We begin with the raw amino-acid sequence, 120 residues long: Large ribosomal subunit protein bL17 (120 aa).

It belongs to the bacterial ribosomal protein bL17 family. Part of the 50S ribosomal subunit. Contacts protein L32.

This chain is Large ribosomal subunit protein bL17, found in Mycoplasmopsis synoviae (strain 53) (Mycoplasma synoviae).